A 575-amino-acid chain; its full sequence is uncharacterized protein (575 aa).

A signal peptide spans Met1 to Ala28. Positions Ser87–Ala151 constitute an SLH domain. Residues Lys158–Gln196 adopt a coiled-coil conformation.

Belongs to the OprB family.

This is an uncharacterized protein from Nostoc sp. (strain PCC 7120 / SAG 25.82 / UTEX 2576).